The chain runs to 459 residues: Bifunctional protein GlmU (459 aa).

The pyrophosphorylase stretch occupies residues 1–228 (MNFKAIILAA…IEELMGVNSR (228 aa)). UDP-N-acetyl-alpha-D-glucosamine contacts are provided by residues 8-11 (LAAG), lysine 22, glutamine 72, and 77-78 (GT). Aspartate 101 lines the Mg(2+) pocket. Glycine 138, glutamate 153, asparagine 168, and asparagine 226 together coordinate UDP-N-acetyl-alpha-D-glucosamine. Asparagine 226 serves as a coordination point for Mg(2+). The interval 229–249 (VELSKAEEIMRRRINESHMVN) is linker. Positions 250 to 459 (GVTIIDTNST…KKNQKDDQSK (210 aa)) are N-acetyltransferase. Positions 331 and 349 each coordinate UDP-N-acetyl-alpha-D-glucosamine. Histidine 361 serves as the catalytic Proton acceptor. UDP-N-acetyl-alpha-D-glucosamine-binding residues include tyrosine 364 and asparagine 375. Residues 384–385 (NY), serine 403, threonine 421, and arginine 438 each bind acetyl-CoA.

In the N-terminal section; belongs to the N-acetylglucosamine-1-phosphate uridyltransferase family. The protein in the C-terminal section; belongs to the transferase hexapeptide repeat family. In terms of assembly, homotrimer. Mg(2+) serves as cofactor.

Its subcellular location is the cytoplasm. It carries out the reaction alpha-D-glucosamine 1-phosphate + acetyl-CoA = N-acetyl-alpha-D-glucosamine 1-phosphate + CoA + H(+). The enzyme catalyses N-acetyl-alpha-D-glucosamine 1-phosphate + UTP + H(+) = UDP-N-acetyl-alpha-D-glucosamine + diphosphate. It participates in nucleotide-sugar biosynthesis; UDP-N-acetyl-alpha-D-glucosamine biosynthesis; N-acetyl-alpha-D-glucosamine 1-phosphate from alpha-D-glucosamine 6-phosphate (route II): step 2/2. Its pathway is nucleotide-sugar biosynthesis; UDP-N-acetyl-alpha-D-glucosamine biosynthesis; UDP-N-acetyl-alpha-D-glucosamine from N-acetyl-alpha-D-glucosamine 1-phosphate: step 1/1. The protein operates within bacterial outer membrane biogenesis; LPS lipid A biosynthesis. In terms of biological role, catalyzes the last two sequential reactions in the de novo biosynthetic pathway for UDP-N-acetylglucosamine (UDP-GlcNAc). The C-terminal domain catalyzes the transfer of acetyl group from acetyl coenzyme A to glucosamine-1-phosphate (GlcN-1-P) to produce N-acetylglucosamine-1-phosphate (GlcNAc-1-P), which is converted into UDP-GlcNAc by the transfer of uridine 5-monophosphate (from uridine 5-triphosphate), a reaction catalyzed by the N-terminal domain. This chain is Bifunctional protein GlmU, found in Clostridioides difficile (strain 630) (Peptoclostridium difficile).